The following is a 371-amino-acid chain: Putative glutamate--cysteine ligase 2 (371 aa).

It belongs to the glutamate--cysteine ligase type 2 family. YbdK subfamily.

It carries out the reaction L-cysteine + L-glutamate + ATP = gamma-L-glutamyl-L-cysteine + ADP + phosphate + H(+). ATP-dependent carboxylate-amine ligase which exhibits weak glutamate--cysteine ligase activity. The sequence is that of Putative glutamate--cysteine ligase 2 from Burkholderia mallei (strain NCTC 10247).